A 1123-amino-acid polypeptide reads, in one-letter code: Telomerase reverse transcriptase (1123 aa).

2 disordered regions span residues 191–242 and 410–439; these read ENKR…KTTK and GTTS…PKCP. Positions 201–210 are enriched in polar residues; sequence QPPTKRQWLS. In terms of domain architecture, Reverse transcriptase spans 596 to 929; sequence LVDDAEAESS…PFVRWTGLLI (334 aa). The Mg(2+) site is built by aspartate 691, aspartate 860, and aspartate 861.

This sequence belongs to the reverse transcriptase family. Telomerase subfamily. Component of the telomerase ribonucleoprotein complex. Interacts with POT1A.

The protein localises to the nucleus. It localises to the chromosome. It is found in the telomere. It carries out the reaction DNA(n) + a 2'-deoxyribonucleoside 5'-triphosphate = DNA(n+1) + diphosphate. Telomerase is a ribonucleoprotein enzyme essential for the replication of chromosome termini in most eukaryotes. It elongates telomeres. It is a reverse transcriptase that adds simple sequence repeats to chromosome ends by copying a template sequence within the RNA component of the enzyme. Required to prevent genome instability induced by breakage-fusion-bridge (BFB) cycles. Can extend completely non-telomeric sequences using RNA template in vitro. The polypeptide is Telomerase reverse transcriptase (TERT) (Arabidopsis thaliana (Mouse-ear cress)).